The sequence spans 380 residues: Glucose-1-phosphate adenylyltransferase (380 aa).

Residues Gly164, 179–180 (EK), and Ser190 each bind alpha-D-glucose 1-phosphate.

This sequence belongs to the bacterial/plant glucose-1-phosphate adenylyltransferase family. In terms of assembly, homotetramer.

The catalysed reaction is alpha-D-glucose 1-phosphate + ATP + H(+) = ADP-alpha-D-glucose + diphosphate. It functions in the pathway glycan biosynthesis; glycogen biosynthesis. Involved in the biosynthesis of ADP-glucose, a building block required for the elongation reactions to produce glycogen. Catalyzes the reaction between ATP and alpha-D-glucose 1-phosphate (G1P) to produce pyrophosphate and ADP-Glc. In Lacticaseibacillus casei (strain BL23) (Lactobacillus casei), this protein is Glucose-1-phosphate adenylyltransferase.